The primary structure comprises 384 residues: F-box only protein 5 (384 aa).

A disordered region spans residues 25–67 (EVKGHKVSPRKTGALSLRSPAATNVSTPLESRSKGPHNKENYQ). Positions 45–54 (AATNVSTPLE) are enriched in polar residues. Positions 55-67 (SRSKGPHNKENYQ) are enriched in basic and acidic residues. Residues 187–234 (CKLMRKDMRHILARILGLLGDCDLISCTKVSRTWRKIICQDQLALQRW) form the F-box domain. Residues 311 to 359 (SLRRCSRCSSPARFDAVMQRAVCTRISCAFEFCTLCQSAFHDSTPCRNT) form a ZBR-type zinc finger. Residues Cys315, Cys318, Cys333, Cys338, Cys343, Cys346, His351, and Cys356 each coordinate Zn(2+).

In terms of assembly, part of a SCF (SKP1-cullin-F-box) protein ligase complex.

The protein localises to the nucleus. Its subcellular location is the cytoplasm. It functions in the pathway protein modification; protein ubiquitination. Its function is as follows. During embryonic development, regulates the integrity of the genome and therefore the cell cycle progression by preventing rereplication through an APC-Cdh1-dependent mechanism. This is F-box only protein 5 from Danio rerio (Zebrafish).